The following is a 215-amino-acid chain: Ribonuclease T (215 aa).

The Exonuclease domain occupies 20–194; the sequence is VVIDVETAGF…YDTLQTAKLF (175 aa). Residues Asp-23, Glu-25, His-181, and Asp-186 each coordinate Mg(2+). The active-site Proton donor/acceptor is His-181.

It belongs to the RNase T family. Homodimer. Mg(2+) is required as a cofactor.

Its function is as follows. Trims short 3' overhangs of a variety of RNA species, leaving a one or two nucleotide 3' overhang. Responsible for the end-turnover of tRNA: specifically removes the terminal AMP residue from uncharged tRNA (tRNA-C-C-A). Also appears to be involved in tRNA biosynthesis. The protein is Ribonuclease T of Yersinia pseudotuberculosis serotype I (strain IP32953).